Reading from the N-terminus, the 277-residue chain is Deoxyguanosine kinase, mitochondrial (277 aa).

A mitochondrion-targeting transit peptide spans 1–39 (MAAGRFLLRRLRASFRSPLRNALVDAPHARAMHDGGGPR). 45-53 (GNIAVGKST) contributes to the ATP binding site. Substrate-binding residues include Glu70, Tyr100, Gln111, and Arg118. The active-site Proton acceptor is the Glu141. The substrate site is built by Arg142 and Asp147. 206–208 (RDR) contributes to the ATP binding site. A substrate-binding site is contributed by Glu211. ATP is bound at residue 254–256 (EDF).

It belongs to the DCK/DGK family. As to quaternary structure, homodimer. Spleen and thymus. Expressed at much lower levels in the brain and liver.

Its subcellular location is the mitochondrion. It is found in the cytoplasm. The catalysed reaction is 2'-deoxyguanosine + ATP = dGMP + ADP + H(+). It carries out the reaction 2'-deoxyadenosine + ATP = dAMP + ADP + H(+). Phosphorylates deoxyguanosine and deoxyadenosine in the mitochondrial matrix, with the highest efficiency for deoxyguanosine. In non-replicating cells, where cytosolic dNTP synthesis is down-regulated, mtDNA synthesis depends solely on DGUOK and TK2. Phosphorylates certain nucleoside analogs. Widely used as target of antiviral and chemotherapeutic agents. The chain is Deoxyguanosine kinase, mitochondrial (Dguok) from Mus musculus (Mouse).